Here is a 987-residue protein sequence, read N- to C-terminus: Ras guanine nucleotide exchange factor efc25 (987 aa).

Basic and acidic residues predominate over residues 1 to 10 (MRRPNLDRLR). Disordered stretches follow at residues 1-50 (MRRP…STMS), 100-130 (FSST…PEIR), and 529-552 (NANT…ISRS). Low complexity predominate over residues 19 to 39 (TSVSKPSTPSYSTYSLSPTFS). Composition is skewed to polar residues over residues 40-50 (DKSVLSPSTMS), 102-111 (STHSLTRQPS), and 540-552 (RQTN…ISRS). The residue at position 552 (serine 552) is a Phosphoserine. Positions 590–723 (SDNNVKGGTL…VILSEIDNLW (134 aa)) constitute an N-terminal Ras-GEF domain. The Ras-GEF domain maps to 752-985 (TPEEFASQMT…FDKSLSLEPR (234 aa)).

It localises to the cytoplasm. Has a role in chromosome segregation and cell morphology upstream of the ras1-scd1 pathway. Promotes the exchange of ras1-bound GDP by GTP leading to its activation. This Schizosaccharomyces pombe (strain 972 / ATCC 24843) (Fission yeast) protein is Ras guanine nucleotide exchange factor efc25 (efc25).